The sequence spans 462 residues: ATP synthase subunit beta 1 (462 aa).

151 to 158 contacts ATP; that stretch reads GGAGVGKT.

This sequence belongs to the ATPase alpha/beta chains family. F-type ATPases have 2 components, CF(1) - the catalytic core - and CF(0) - the membrane proton channel. CF(1) has five subunits: alpha(3), beta(3), gamma(1), delta(1), epsilon(1). CF(0) has four main subunits: a(1), b(1), b'(1) and c(9-12).

The protein localises to the cell inner membrane. The enzyme catalyses ATP + H2O + 4 H(+)(in) = ADP + phosphate + 5 H(+)(out). Functionally, produces ATP from ADP in the presence of a proton gradient across the membrane. The catalytic sites are hosted primarily by the beta subunits. In Chlorobium luteolum (strain DSM 273 / BCRC 81028 / 2530) (Pelodictyon luteolum), this protein is ATP synthase subunit beta 1.